A 60-amino-acid polypeptide reads, in one-letter code: Large ribosomal subunit protein uL30 (60 aa).

This sequence belongs to the universal ribosomal protein uL30 family. Part of the 50S ribosomal subunit.

In Lactobacillus johnsonii (strain CNCM I-12250 / La1 / NCC 533), this protein is Large ribosomal subunit protein uL30.